The following is an 884-amino-acid chain: Telomerase reverse transcriptase (884 aa).

The region spanning 422–725 is the Reverse transcriptase domain; sequence CRNHNSYTLS…TVIQFCAMHI (304 aa). Residues aspartate 530, aspartate 670, and aspartate 671 each contribute to the Mg(2+) site.

Belongs to the reverse transcriptase family. Telomerase subfamily. In terms of assembly, catalytic subunit of the telomerase holoenzyme complex composed minimally of EST2 and the telomerase RNA template component.

Its subcellular location is the nucleus. It localises to the chromosome. It is found in the telomere. The catalysed reaction is DNA(n) + a 2'-deoxyribonucleoside 5'-triphosphate = DNA(n+1) + diphosphate. Functionally, telomerase is a ribonucleoprotein enzyme essential for the replication of chromosome termini in most eukaryotes. It elongates telomeres. It is a reverse transcriptase that adds simple sequence repeats to chromosome ends by copying a template sequence within the RNA component of the enzyme. The protein is Telomerase reverse transcriptase (EST2) of Saccharomyces cerevisiae (strain ATCC 204508 / S288c) (Baker's yeast).